A 158-amino-acid polypeptide reads, in one-letter code: Chromobox protein homolog 7 (158 aa).

Residues 11–69 (FAVESIRKKRVRKGKVEYLVKWKGWPPKYSTWEPEEHILDPRLVMAYEEKEEKDRASGY) form the Chromo domain. The interval 60 to 124 (KEEKDRASGY…PPPWTPMLPS (65 aa)) is disordered. A compositionally biased stretch (basic residues) spans 68-78 (GYRKRGPKPKR).

As to quaternary structure, component of a PRC1-like complex. Distinct PRC1-like core complexes are composed of a RING1 subunit (RING1B or RING1A), one of the six PCGF proteins (PCGF1-6), one PHC protein (PHC1-3) and one of the CBX proteins (CBX2, CBX4, CBX6, CBX7 or CBX8). The composition of the PRC1 complex may differ between the PRC1 complex in pluripotent embryonic stem cells containing RNF2, CBX7 and PCGF2, and the PRC1 complex in differentiating cells containing RNF2, CBX2, CBX4 and BMI1. Interacts with RING1. Interacts with RNF2/RING1B. Interacts with PCGF1, PCGF2, PCGF3, PCGF5 and PCGF6. Interacts (via chromodomain) with histone H3K9Me3 and H3K27me3. Interacts with H3K9Me2 and H4K20Me1. Interacts (via chromodomain) with single-stranded and double-stranded RNA; RNA binding seems to be required for the localization to chromatin.

The protein localises to the nucleus. It is found in the chromosome. Functionally, component of a Polycomb group (PcG) multiprotein PRC1-like complex, a complex class required to maintain the transcriptionally repressive state of many genes, including Hox genes, throughout development. PcG PRC1 complex acts via chromatin remodeling and modification of histones; it mediates monoubiquitination of histone H2A 'Lys-119', rendering chromatin heritably changed in its expressibility. Promotes histone H3 trimethylation at 'Lys-9' (H3K9me3). Binds to histone H3 trimethylated 'Lys-9' (H3K9me3) or at 'Lys-27' (H3K27me3). May possibly also bind trimethylated lysine residues in other proteins (in vitro). Binds non-coding, single-stranded and double-stranded RNA. Plays a role in the timely repression of differentiation-specific genes in pluripotent embryonic stem cells to maintain the undifferentiated state. Regulator of cellular lifespan by maintaining the repression of CDKN2A, but not by inducing telomerase activity. The chain is Chromobox protein homolog 7 (Cbx7) from Rattus norvegicus (Rat).